Here is a 248-residue protein sequence, read N- to C-terminus: UPF0273 protein APE_1505.1 (248 aa).

Positions 3–247 (DRVKTGIPGM…VVRIGRRVSI (245 aa)) constitute a KaiC domain. Residue 30–37 (GGPGTGKS) participates in ATP binding.

This sequence belongs to the UPF0273 family.

This chain is UPF0273 protein APE_1505.1, found in Aeropyrum pernix (strain ATCC 700893 / DSM 11879 / JCM 9820 / NBRC 100138 / K1).